Consider the following 158-residue polypeptide: Ribosomal RNA large subunit methyltransferase H (158 aa).

S-adenosyl-L-methionine is bound by residues Leu72, Gly103, and 122–127; that span reads LGNLTL.

The protein belongs to the RNA methyltransferase RlmH family. As to quaternary structure, homodimer.

It localises to the cytoplasm. It catalyses the reaction pseudouridine(1915) in 23S rRNA + S-adenosyl-L-methionine = N(3)-methylpseudouridine(1915) in 23S rRNA + S-adenosyl-L-homocysteine + H(+). In terms of biological role, specifically methylates the pseudouridine at position 1915 (m3Psi1915) in 23S rRNA. This Acidiphilium cryptum (strain JF-5) protein is Ribosomal RNA large subunit methyltransferase H.